The following is a 191-amino-acid chain: Insulin-like peptide INSL6 (191 aa).

Residues 1–22 (MKQLCCSCLLWLGLLLTPFSRE) form the signal peptide. Disulfide bonds link C33/C172, C45/C185, and C171/C176. A propeptide spans 53–161 (FEMEEQSPMT…RSLFWGNHSQ (109 aa)) (connecting peptide).

This sequence belongs to the insulin family.

The protein resides in the secreted. May have a role in sperm development and fertilization. This Mus musculus (Mouse) protein is Insulin-like peptide INSL6 (Insl6).